The sequence spans 129 residues: Small ribosomal subunit protein uS11 (129 aa).

It belongs to the universal ribosomal protein uS11 family. In terms of assembly, part of the 30S ribosomal subunit. Interacts with proteins S7 and S18. Binds to IF-3.

Functionally, located on the platform of the 30S subunit, it bridges several disparate RNA helices of the 16S rRNA. Forms part of the Shine-Dalgarno cleft in the 70S ribosome. The chain is Small ribosomal subunit protein uS11 from Baumannia cicadellinicola subsp. Homalodisca coagulata.